We begin with the raw amino-acid sequence, 302 residues long: Transmembrane protein 191 (302 aa).

Residues 5-147 (QEQLLQLQKD…HLELAEAKFS (143 aa)) adopt a coiled-coil conformation. A disordered region spans residues 39 to 66 (LTGRLEELRERERSLQRRRSQASRAIRG). Over residues 42–53 (RLEELRERERSL) the composition is skewed to basic and acidic residues. The helical transmembrane segment at 242–262 (LQTLLLLPLGFLVLPLIYVVL) threads the bilayer.

Belongs to the TMEM191 family.

Its subcellular location is the membrane. This is Transmembrane protein 191 from Mus musculus (Mouse).